A 365-amino-acid polypeptide reads, in one-letter code: Donuts protein 1 (365 aa).

Residues 28–49 (NSGLELPSQDYTNVEEKESSPK) are disordered. Residues 82 to 125 (EKLCVLKELKIAFPEVDDTLIKAILIASQGVLEPAFNSLLYYSS) form the CUE domain. 2 disordered regions span residues 215–246 (HNTI…KGVN) and 286–335 (ESEE…YKSA). Over residues 224-244 (SILKGKEKGKEEEKEKGEEKG) the composition is skewed to basic and acidic residues. The segment covering 286–295 (ESEEEEEQDV) has biased composition (acidic residues). Positions 315–331 (EAQRDSADRLPAKDDGG) are enriched in basic and acidic residues.

As to quaternary structure, may interact directly with ADY3. Probable component of a spindle pole body (SPB) complex composed of ADY3, SSP1, DON1, MPC54, SPO21/MPC70, NUD1 and CNM67.

The protein resides in the prospore membrane. Its function is as follows. Involved in the pathway that organizes the prospore membrane (PSM) during sporulation. This Saccharomyces cerevisiae (strain ATCC 204508 / S288c) (Baker's yeast) protein is Donuts protein 1 (DON1).